A 41-amino-acid chain; its full sequence is Large ribosomal subunit protein bL36 (41 aa).

This sequence belongs to the bacterial ribosomal protein bL36 family.

The chain is Large ribosomal subunit protein bL36 from Cereibacter sphaeroides (strain ATCC 17029 / ATH 2.4.9) (Rhodobacter sphaeroides).